A 135-amino-acid chain; its full sequence is Small ribosomal subunit protein uS17 (135 aa).

The interval 1-59 (MAEAKTGAKAAPRVAKAAKAAPKKAAPNDAEAIGAANAANVKGPKHTPRTPKPRGRRKT) is disordered. Over residues 8-42 (AKAAPRVAKAAKAAPKKAAPNDAEAIGAANAANVK) the composition is skewed to low complexity. A compositionally biased stretch (basic residues) spans 43–59 (GPKHTPRTPKPRGRRKT).

This sequence belongs to the universal ribosomal protein uS17 family. Part of the 30S ribosomal subunit.

Functionally, one of the primary rRNA binding proteins, it binds specifically to the 5'-end of 16S ribosomal RNA. This is Small ribosomal subunit protein uS17 from Mycobacterium bovis (strain ATCC BAA-935 / AF2122/97).